A 160-amino-acid polypeptide reads, in one-letter code: Protein-export protein SecB (160 aa).

This sequence belongs to the SecB family. As to quaternary structure, homotetramer, a dimer of dimers. One homotetramer interacts with 1 SecA dimer.

It is found in the cytoplasm. One of the proteins required for the normal export of preproteins out of the cell cytoplasm. It is a molecular chaperone that binds to a subset of precursor proteins, maintaining them in a translocation-competent state. It also specifically binds to its receptor SecA. This chain is Protein-export protein SecB, found in Burkholderia lata (strain ATCC 17760 / DSM 23089 / LMG 22485 / NCIMB 9086 / R18194 / 383).